We begin with the raw amino-acid sequence, 142 residues long: Putative pre-16S rRNA nuclease (142 aa).

Belongs to the YqgF nuclease family.

It is found in the cytoplasm. Its function is as follows. Could be a nuclease involved in processing of the 5'-end of pre-16S rRNA. The chain is Putative pre-16S rRNA nuclease from Staphylococcus aureus (strain JH1).